We begin with the raw amino-acid sequence, 750 residues long: MGRCNRGSGPPSSLLLLLLLLLWLLAVPGASAAPRSALYSPSDPLTLLQADTVRGAVLGSRSAWAVEFFASWCGHCIAFAPTWKALAEDVKAWRPALNLAALDCAEETNSAVCRDFNIPGFPTVRFFKAFTKNGSGAVFPVAGADVQTLRERLIDALESHHDTWPPACPPLEPARLEEIDGFFARNNEEYLALIFEKGGSYLGREVALDLSQHKGVAVRRVLNTEANVVRKFGVTDFPSCYLLFRNGSVSRVPVLMESRSFYTAYLQRLSGLTREAAQTTVAPTTANKIAPTVWKFADRSKIYMADLESALHYILRIEVGRFPVLEGQCLVALKKFVAVLAKYFPGRPLVQNFLHSVNEWLKRQKRNKIPYSFFKTALDDRKEGAVLAKKVNWIGCQGSEPHFRGFPCSLWVLFHFLTVQAARQNIDRSQEAAKAKEVLPAIRGYVHYFFGCRDCASHFEQMAAASMHRVRSPNAAVLWLWSSHNRVNARLAGAPSEDPQFPKVQWPPRELCSACHNERLDVPVWDVEATLNFLKAHFSPSNIILDFAAAGSAAQREAQNVAAAPELAMGALELESRNSTVDLGKPEMMKSSTNTTPDVPAERPEASRPPKLRPGLGAAPGQEPPEHMAELQTNEREQPRGQWHLSKRDTGAALLAESRAEKNHLWGPSEVRRVGRSSKQLVDIPEGQLEAQAGRGRGQWLQVLGGGFSYLDISLCVGLYSLSFMGLLAMYAYFRAKIRALKGHAGHPAA.

The N-terminal stretch at 1 to 32 is a signal peptide; that stretch reads MGRCNRGSGPPSSLLLLLLLLLWLLAVPGASA. Positions 39–159 constitute a Thioredoxin domain; sequence YSPSDPLTLL…RERLIDALES (121 aa). Catalysis depends on nucleophile residues Cys73 and Cys76. Cystine bridges form between Cys73–Cys76 and Cys104–Cys113. Asn133 and Asn246 each carry an N-linked (GlcNAc...) asparagine glycan. Cys396 and Cys408 are joined by a disulfide. The region spanning 399 to 506 is the ERV/ALR sulfhydryl oxidase domain; it reads SEPHFRGFPC…EDPQFPKVQW (108 aa). FAD-binding residues include Arg404, Trp411, and His415. Ser429 bears the Phosphoserine mark. Residues Cys452 and Cys455 are joined by a disulfide bond. FAD contacts are provided by residues Asp454, His458, 481 to 488, Lys503, and Trp506; that span reads WSSHNRVN. Cys512 and Cys515 are disulfide-bonded. Asn578 carries an N-linked (GlcNAc...) asparagine glycan. Residues 578–645 form a disordered region; it reads NSTVDLGKPE…REQPRGQWHL (68 aa). Over residues 624–639 the composition is skewed to basic and acidic residues; sequence PPEHMAELQTNEREQP. Residues 713–733 form a helical membrane-spanning segment; sequence ISLCVGLYSLSFMGLLAMYAY.

The protein belongs to the quiescin-sulfhydryl oxidase (QSOX) family. Monomer. It depends on FAD as a cofactor. In terms of processing, N-glycosylated. O-glycosylated on Thr and Ser residues.

Its subcellular location is the golgi apparatus membrane. The protein resides in the secreted. It catalyses the reaction 2 R'C(R)SH + O2 = R'C(R)S-S(R)CR' + H2O2. Functionally, catalyzes the oxidation of sulfhydryl groups in peptide and protein thiols to disulfides with the reduction of oxygen to hydrogen peroxide. Plays a role in disulfide bond formation in a variety of extracellular proteins. In fibroblasts, required for normal incorporation of laminin into the extracellular matrix, and thereby for normal cell-cell adhesion and cell migration. The chain is Sulfhydryl oxidase 1 (QSOX1) from Pongo abelii (Sumatran orangutan).